Consider the following 236-residue polypeptide: 2,3,4,5-tetrahydropyridine-2,6-dicarboxylate N-acetyltransferase (236 aa).

Belongs to the transferase hexapeptide repeat family. DapH subfamily.

It carries out the reaction (S)-2,3,4,5-tetrahydrodipicolinate + acetyl-CoA + H2O = L-2-acetamido-6-oxoheptanedioate + CoA. The protein operates within amino-acid biosynthesis; L-lysine biosynthesis via DAP pathway; LL-2,6-diaminopimelate from (S)-tetrahydrodipicolinate (acetylase route): step 1/3. Catalyzes the transfer of an acetyl group from acetyl-CoA to tetrahydrodipicolinate. The sequence is that of 2,3,4,5-tetrahydropyridine-2,6-dicarboxylate N-acetyltransferase from Listeria innocua serovar 6a (strain ATCC BAA-680 / CLIP 11262).